A 215-amino-acid chain; its full sequence is Large ribosomal subunit protein uL16m (215 aa).

A mitochondrion-targeting transit peptide spans 1–36 (MALQQYNKFPFFFSGILGPTRLNGLQMPPIQTMVRW).

It belongs to the universal ribosomal protein uL16 family. Component of the mitochondrial large ribosomal subunit (mt-LSU). Mature yeast 74S mitochondrial ribosomes consist of a small (37S) and a large (54S) subunit. The 37S small subunit contains a 15S ribosomal RNA (15S mt-rRNA) and at least 32 different proteins. The 54S large subunit contains a 21S rRNA (21S mt-rRNA) and at least 45 different proteins.

The protein localises to the mitochondrion. In terms of biological role, component of the mitochondrial ribosome (mitoribosome), a dedicated translation machinery responsible for the synthesis of mitochondrial genome-encoded proteins, including at least some of the essential transmembrane subunits of the mitochondrial respiratory chain. The mitoribosomes are attached to the mitochondrial inner membrane and translation products are cotranslationally integrated into the membrane. The sequence is that of Large ribosomal subunit protein uL16m (mrpl16) from Schizosaccharomyces pombe (strain 972 / ATCC 24843) (Fission yeast).